The following is a 427-amino-acid chain: Diaminobutyrate--2-oxoglutarate transaminase (427 aa).

The residue at position 269 (K269) is an N6-(pyridoxal phosphate)lysine.

Belongs to the class-III pyridoxal-phosphate-dependent aminotransferase family. Pyridoxal 5'-phosphate is required as a cofactor.

It catalyses the reaction L-2,4-diaminobutanoate + 2-oxoglutarate = L-aspartate 4-semialdehyde + L-glutamate. It functions in the pathway amine and polyamine biosynthesis; ectoine biosynthesis; L-ectoine from L-aspartate 4-semialdehyde: step 1/3. Functionally, catalyzes reversively the conversion of L-aspartate beta-semialdehyde (ASA) to L-2,4-diaminobutyrate (DABA) by transamination with L-glutamate. This Halalkalibacterium halodurans (strain ATCC BAA-125 / DSM 18197 / FERM 7344 / JCM 9153 / C-125) (Bacillus halodurans) protein is Diaminobutyrate--2-oxoglutarate transaminase (ectB).